The following is a 500-amino-acid chain: L-arabinose isomerase (500 aa).

The Mn(2+) site is built by E306, E333, H350, and H450.

It belongs to the arabinose isomerase family. As to quaternary structure, homohexamer. Mn(2+) serves as cofactor.

The enzyme catalyses beta-L-arabinopyranose = L-ribulose. The protein operates within carbohydrate degradation; L-arabinose degradation via L-ribulose; D-xylulose 5-phosphate from L-arabinose (bacterial route): step 1/3. Functionally, catalyzes the conversion of L-arabinose to L-ribulose. In Escherichia coli O6:H1 (strain CFT073 / ATCC 700928 / UPEC), this protein is L-arabinose isomerase.